The chain runs to 336 residues: Mediator of RNA polymerase II transcription subunit 4 (336 aa).

Disordered regions lie at residues 1–45 and 59–85; these read MNST…SNVV and NVEE…QDEA. A coiled-coil region spans residues 154 to 192; it reads QQAAQTIAALERVSEGLDDKIRDMIRKLAECRRELRNYQ. Residues 281–336 form a disordered region; it reads PVANGVAQNHNNGYAMERRLSTGYGSDNDGDTNMNGRSGLAGLDIFDDDDDDDDDD. Over residues 325–336 the composition is skewed to acidic residues; the sequence is IFDDDDDDDDDD.

This sequence belongs to the Mediator complex subunit 4 family. Component of the Mediator complex.

Its subcellular location is the nucleus. In terms of biological role, component of the Mediator complex, a coactivator involved in the regulated transcription of nearly all RNA polymerase II-dependent genes. Mediator functions as a bridge to convey information from gene-specific regulatory proteins to the basal RNA polymerase II transcription machinery. Mediator is recruited to promoters by direct interactions with regulatory proteins and serves as a scaffold for the assembly of a functional preinitiation complex with RNA polymerase II and the general transcription factors. The chain is Mediator of RNA polymerase II transcription subunit 4 (MED4) from Yarrowia lipolytica (strain CLIB 122 / E 150) (Yeast).